Reading from the N-terminus, the 440-residue chain is Chromosome partition protein MukF (440 aa).

Residues 208–236 (LSETSGTLRELQDTLEAAGDKLQANLLRI) form a leucine-zipper region.

The protein belongs to the MukF family. In terms of assembly, interacts, and probably forms a ternary complex, with MukE and MukB via its C-terminal region. The complex formation is stimulated by calcium or magnesium. It is required for an interaction between MukE and MukB.

It localises to the cytoplasm. The protein localises to the nucleoid. Its function is as follows. Involved in chromosome condensation, segregation and cell cycle progression. May participate in facilitating chromosome segregation by condensation DNA from both sides of a centrally located replisome during cell division. Not required for mini-F plasmid partitioning. Probably acts via its interaction with MukB and MukE. Overexpression results in anucleate cells. It has a calcium binding activity. The protein is Chromosome partition protein MukF of Shigella boydii serotype 18 (strain CDC 3083-94 / BS512).